Here is a 216-residue protein sequence, read N- to C-terminus: Transmembrane emp24 domain-containing protein eca (216 aa).

Positions 1-20 are cleaved as a signal peptide; that stretch reads MRDQWICLALVLCALHSACG. Over 21–183 the chain is Lumenal; it reads LYFHISETER…RHTSESTNSR (163 aa). The GOLD domain occupies 30–126; the sequence is RKCFIEEVPD…QLRVHLDIQV (97 aa). Residues 134–164 adopt a coiled-coil conformation; sequence ANVAQKEKLTELQLRIRQLLDQVEQITKEQN. A helical transmembrane segment spans residues 184–203; the sequence is VLWWSLAQTVVLVCMGFWQM. Residues 204 to 216 are Cytoplasmic-facing; the sequence is RHLKSFFEAKKLV. Residues 213-216 carry the Prevents secretion from ER motif; it reads KKLV.

It belongs to the EMP24/GP25L family.

It localises to the endoplasmic reticulum membrane. Its function is as follows. Eca and bai are essential, though not redundant, for dorsoventral patterning of the embryo. Specifically required during early embryogenesis for the activity of maternal tkv, while the zygotic tkv is not affected. This chain is Transmembrane emp24 domain-containing protein eca, found in Drosophila mojavensis (Fruit fly).